The primary structure comprises 397 residues: Acetate kinase (397 aa).

N7 lines the Mg(2+) pocket. K14 contacts ATP. Residue R90 coordinates substrate. Catalysis depends on D147, which acts as the Proton donor/acceptor. ATP-binding positions include 207 to 211, 282 to 284, and 330 to 334; these read HLGNG, DFR, and GLGEN. E383 lines the Mg(2+) pocket.

It belongs to the acetokinase family. As to quaternary structure, homodimer. Mg(2+) is required as a cofactor. It depends on Mn(2+) as a cofactor.

The protein localises to the cytoplasm. The enzyme catalyses acetate + ATP = acetyl phosphate + ADP. The protein operates within metabolic intermediate biosynthesis; acetyl-CoA biosynthesis; acetyl-CoA from acetate: step 1/2. Catalyzes the formation of acetyl phosphate from acetate and ATP. Can also catalyze the reverse reaction. This chain is Acetate kinase, found in Clostridium botulinum (strain Okra / Type B1).